Consider the following 305-residue polypeptide: GMP synthase [glutamine-hydrolyzing] subunit B (305 aa).

The 184-residue stretch at 2–185 (VETEEFIAEA…LGLEEVISER (184 aa)) folds into the GMPS ATP-PPase domain. Residue 29 to 35 (SGGVDSS) participates in ATP binding.

In terms of assembly, heterodimer composed of a glutamine amidotransferase subunit (A) and a GMP-binding subunit (B).

The catalysed reaction is XMP + L-glutamine + ATP + H2O = GMP + L-glutamate + AMP + diphosphate + 2 H(+). Its pathway is purine metabolism; GMP biosynthesis; GMP from XMP (L-Gln route): step 1/1. Its function is as follows. Catalyzes the synthesis of GMP from XMP. This is GMP synthase [glutamine-hydrolyzing] subunit B from Halorubrum lacusprofundi (strain ATCC 49239 / DSM 5036 / JCM 8891 / ACAM 34).